Reading from the N-terminus, the 98-residue chain is Putative septation protein SpoVG (98 aa).

The protein belongs to the SpoVG family.

In terms of biological role, essential for sporulation. Interferes with or is a negative regulator of the pathway leading to asymmetric septation. The sequence is that of Putative septation protein SpoVG from Shouchella clausii (strain KSM-K16) (Alkalihalobacillus clausii).